We begin with the raw amino-acid sequence, 707 residues long: Zinc finger protein 60 (707 aa).

The 73-residue stretch at 14-86 (VTFRDVAVDF…VKKETGRPSQ (73 aa)) folds into the KRAB domain. C2H2-type zinc fingers lie at residues 173-195 (YKCK…ESIH), 201-223 (YECK…QKSH), 229-251 (FECN…KNIH), 257-282 (FECE…RTIH), 288-310 (YKCN…QKIH), 316-338 (FHCK…ENIH), 344-366 (FECK…YDTH), 372-394 (FECN…QKTH), 400-422 (FKCK…QRIH), 428-450 (YQCK…QSIH), 456-478 (FECK…QRFH), 484-506 (FECK…KTSH), 512-534 (FECK…RIIH), 540-562 (YKCN…EKIH), 568-590 (FECK…QTIH), 596-618 (YECE…QRIH), 624-646 (FQCK…ERIH), 652-674 (FQCK…FRIH), and 680-702 (YECS…QSIH).

This sequence belongs to the krueppel C2H2-type zinc-finger protein family. In terms of tissue distribution, expressed widely and evenly in most adult mouse tissues.

The protein localises to the nucleus. In terms of biological role, may have a role during differentiation processes. The chain is Zinc finger protein 60 (Zfp60) from Mus musculus (Mouse).